The chain runs to 292 residues: 4-hydroxy-tetrahydrodipicolinate synthase (292 aa).

T45 serves as a coordination point for pyruvate. Residue Y133 is the Proton donor/acceptor of the active site. K161 acts as the Schiff-base intermediate with substrate in catalysis. I203 serves as a coordination point for pyruvate.

The protein belongs to the DapA family. In terms of assembly, homotetramer; dimer of dimers.

The protein resides in the cytoplasm. The enzyme catalyses L-aspartate 4-semialdehyde + pyruvate = (2S,4S)-4-hydroxy-2,3,4,5-tetrahydrodipicolinate + H2O + H(+). It functions in the pathway amino-acid biosynthesis; L-lysine biosynthesis via DAP pathway; (S)-tetrahydrodipicolinate from L-aspartate: step 3/4. Catalyzes the condensation of (S)-aspartate-beta-semialdehyde [(S)-ASA] and pyruvate to 4-hydroxy-tetrahydrodipicolinate (HTPA). This Sodalis glossinidius (strain morsitans) protein is 4-hydroxy-tetrahydrodipicolinate synthase.